We begin with the raw amino-acid sequence, 249 residues long: tRNA (guanine-N(1)-)-methyltransferase (249 aa).

S-adenosyl-L-methionine contacts are provided by residues Gly-113 and 132–137; that span reads VGDFVV.

It belongs to the RNA methyltransferase TrmD family. Homodimer.

It localises to the cytoplasm. The enzyme catalyses guanosine(37) in tRNA + S-adenosyl-L-methionine = N(1)-methylguanosine(37) in tRNA + S-adenosyl-L-homocysteine + H(+). In terms of biological role, specifically methylates guanosine-37 in various tRNAs. The polypeptide is tRNA (guanine-N(1)-)-methyltransferase (Desulforudis audaxviator (strain MP104C)).